Here is a 704-residue protein sequence, read N- to C-terminus: Glycogen [starch] synthase, liver (704 aa).

Ser-8 is subject to Phosphoserine; by AMPK and PKA. Ser-11 carries the post-translational modification Phosphoserine. Lys-40 contacts UDP. His-205 and Arg-211 together coordinate UDP-alpha-D-glucose. Residues His-291, Glu-292, Gln-294, His-297, and Lys-301 each contribute to the alpha-D-glucose 6-phosphate site. A UDP-binding site is contributed by Arg-331. Residue Arg-331 coordinates UDP-alpha-D-glucose. His-501 is a binding site for alpha-D-glucose 6-phosphate. Residues Glu-510, Trp-512, and Gly-513 each coordinate UDP-alpha-D-glucose. Thr-515 serves as a coordination point for UDP. Alpha-D-glucose 6-phosphate is bound by residues Arg-582 and Arg-586. Residues 620–704 form a disordered region; that stretch reads KFHLEPTSPP…KKKLHGEYKN (85 aa). Position 627 is a phosphoserine (Ser-627). A phosphoserine; by GSK3-alpha and GSK3-beta mark is found at Ser-641, Ser-645, Ser-649, and Ser-653. The span at 647–657 shows a compositional bias: low complexity; sequence SGSQASSPQCS. A Phosphoserine; by CK2 modification is found at Ser-657. The segment covering 658–675 has biased composition (acidic residues); it reads DAEDEEDEDERYDEEEEA. Ser-684 is subject to Phosphoserine.

This sequence belongs to the glycosyltransferase 3 family. In terms of assembly, part of the glycogen synthase (GS)-glycogenin complex, a heterooctamer composed of a tetramer of GS and 2 dimers of glycogenin, where each GS protomer binds to one glycogenin subunit (via glycogenin C-terminus); the GS tetramer may dissociate from glycogenin dimers to continue glycogen polymerization on its own. May also form a heterooctamer complex with GYG1 (via GYG1 C-terminus). In terms of processing, phosphorylation reduces the activity towards UDP-alpha-D-glucose. Primed phosphorylation at Ser-657 (site 5) by CSNK2A1 and CSNK2A2 is required for inhibitory phosphorylation at Ser-641 (site 3a), Ser-645 (site 3b), Ser-649 (site 3c) and Ser-653 (site 4) by GSK3A an GSK3B. Dephosphorylation at Ser-641 and Ser-645 by PP1 activates the enzyme. Phosphorylation at Ser-8 is not required for interaction with GYG1. Interaction with GYG1 does not regulate the phosphorylation at Ser-8 and Ser-641. In terms of tissue distribution, specifically expressed in liver.

It catalyses the reaction [(1-&gt;4)-alpha-D-glucosyl](n) + UDP-alpha-D-glucose = [(1-&gt;4)-alpha-D-glucosyl](n+1) + UDP + H(+). It functions in the pathway glycan biosynthesis; glycogen biosynthesis. Its activity is regulated as follows. Allosteric activation by glucose-6-phosphate. Phosphorylation reduces the activity towards UDP-glucose. When in the non-phosphorylated state, glycogen synthase does not require glucose-6-phosphate as an allosteric activator; when phosphorylated it does. Functionally, glycogen synthase participates in the glycogen biosynthetic process along with glycogenin and glycogen branching enzyme. Extends the primer composed of a few glucose units formed by glycogenin by adding new glucose units to it. In this context, glycogen synthase transfers the glycosyl residue from UDP-Glc to the non-reducing end of alpha-1,4-glucan. This chain is Glycogen [starch] synthase, liver, found in Mus musculus (Mouse).